Reading from the N-terminus, the 968-residue chain is Alanine--tRNA ligase, cytoplasmic (968 aa).

N-acetylmethionine is present on Met1. Phosphoserine occurs at positions 3 and 8. Lys19 bears the N6-acetyllysine mark. Residues Arg77, His95, Trp176, and 214 to 216 (IWN) each bind ATP. Positions 216 and 239 each coordinate L-alanine. Residue Gly243 participates in ATP binding. Phosphoserine is present on residues Ser399 and Ser555. Residues His605, His609, Cys723, and His727 each contribute to the Zn(2+) site. Residues 750 to 763 (RRIVAVTGAEAQKA) carry the Nuclear localization signal motif. Lys876 carries the N6-acetyllysine modification. Lys943 carries the N6,N6,N6-trimethyllysine; alternate modification. Lys943 is subject to N6,N6-dimethyllysine; alternate. At Lys943 the chain carries N6-methyllysine; alternate.

The protein belongs to the class-II aminoacyl-tRNA synthetase family. As to quaternary structure, monomer. Interacts with ANKRD16; the interaction is direct. It depends on Zn(2+) as a cofactor. ISGylated. In terms of processing, methylation at 'Lys-943' by METTL21C.

The protein localises to the cytoplasm. It is found in the nucleus. It carries out the reaction tRNA(Ala) + L-alanine + ATP = L-alanyl-tRNA(Ala) + AMP + diphosphate. The catalysed reaction is (S)-lactate + ATP + H(+) = (S)-lactoyl-AMP + diphosphate. It catalyses the reaction (S)-lactoyl-AMP + L-lysyl-[protein] = N(6)-[(S)-lactoyl]-L-lysyl-[protein] + AMP + 2 H(+). Its activity is regulated as follows. The protein lactyltransferase activity is inhibited by beta-alanine. In terms of biological role, catalyzes the attachment of alanine to tRNA(Ala) in a two-step reaction: alanine is first activated by ATP to form Ala-AMP and then transferred to the acceptor end of tRNA(Ala). Also edits incorrectly charged tRNA(Ala) via its editing domain. In presence of high levels of lactate, also acts as a protein lactyltransferase that mediates lactylation of lysine residues in target proteins, such as TEAD1, TP53/p53 and YAP1. Protein lactylation takes place in a two-step reaction: lactate is first activated by ATP to form lactate-AMP and then transferred to lysine residues of target proteins. Acts as an inhibitor of TP53/p53 activity by catalyzing lactylation of TP53/p53. Acts as a positive regulator of the Hippo pathway by mediating lactylation of TEAD1 and YAP1. This chain is Alanine--tRNA ligase, cytoplasmic, found in Homo sapiens (Human).